We begin with the raw amino-acid sequence, 517 residues long: GMP synthase [glutamine-hydrolyzing] (517 aa).

The 191-residue stretch at 9–199 folds into the Glutamine amidotransferase type-1 domain; the sequence is RILILDFGSQ…VLGVCGCERL (191 aa). The Nucleophile role is filled by Cys-86. Catalysis depends on residues His-173 and Glu-175. In terms of domain architecture, GMPS ATP-PPase spans 200-392; that stretch reads WTSESIIEDA…LGLPYNMLYR (193 aa). 227–233 provides a ligand contact to ATP; it reads SGGVDSS.

Homodimer.

It catalyses the reaction XMP + L-glutamine + ATP + H2O = GMP + L-glutamate + AMP + diphosphate + 2 H(+). It functions in the pathway purine metabolism; GMP biosynthesis; GMP from XMP (L-Gln route): step 1/1. Catalyzes the synthesis of GMP from XMP. The sequence is that of GMP synthase [glutamine-hydrolyzing] from Vibrio cholerae serotype O1 (strain ATCC 39541 / Classical Ogawa 395 / O395).